The chain runs to 98 residues: NADH-ubiquinone oxidoreductase chain 4L (98 aa).

A run of 3 helical transmembrane segments spans residues 1-21 (MPSI…GMLI), 29-49 (SLLC…LTAL), and 61-81 (IVLL…LVMV).

It belongs to the complex I subunit 4L family. As to quaternary structure, core subunit of respiratory chain NADH dehydrogenase (Complex I) which is composed of 45 different subunits.

It is found in the mitochondrion inner membrane. The catalysed reaction is a ubiquinone + NADH + 5 H(+)(in) = a ubiquinol + NAD(+) + 4 H(+)(out). Core subunit of the mitochondrial membrane respiratory chain NADH dehydrogenase (Complex I) which catalyzes electron transfer from NADH through the respiratory chain, using ubiquinone as an electron acceptor. Part of the enzyme membrane arm which is embedded in the lipid bilayer and involved in proton translocation. The protein is NADH-ubiquinone oxidoreductase chain 4L (MT-ND4L) of Lepus europaeus (European hare).